We begin with the raw amino-acid sequence, 317 residues long: MMKIYLMGSDQRIVRCARVSFAKDSYVDEKRDKRLIRYLFKHRHASPFEHNIIAFEWKKEKWIELLSKLENPTVQVYYSNGFVFLNLRNAINVWELLPDAVKERIKEAFPTTYGVIQRRGEIEDEELYSLPYTKDKAYVKEKIETSSGWIGLVDKLELETDMDFYTFVVECPLFVARQWMRHRFGSYNEVSKRYVGKEFLEFYLPKYIRKQAEKNKQASVDEPISESEVFIKKIENLISKSVKLYEEIIEKGGAKELARGVLPQFMKTRFYWTVPRISLDNFITLRTHEGAQKEIREFAEAIKEMVGYRGTDKKNVI.

Ser-46 lines the FAD pocket. Residues Phe-55 to Thr-166 form an insert region. Residues Ala-100–Ile-317 enclose the ThyX domain. DUMP-binding positions include Gln-178–Arg-181, Glu-189–Arg-193, and Arg-259. FAD contacts are provided by residues Arg-181–Arg-183 and Glu-189. Residues Arg-181–Ser-191 carry the ThyX motif motif. FAD is bound at residue Asn-281. Arg-286 serves as a coordination point for dUMP. Arg-286 acts as the Involved in ionization of N3 of dUMP, leading to its activation in catalysis.

It belongs to the thymidylate synthase ThyX family. In terms of assembly, homotetramer. Requires FAD as cofactor.

The enzyme catalyses dUMP + (6R)-5,10-methylene-5,6,7,8-tetrahydrofolate + NADPH + H(+) = dTMP + (6S)-5,6,7,8-tetrahydrofolate + NADP(+). It functions in the pathway pyrimidine metabolism; dTTP biosynthesis. Catalyzes the reductive methylation of 2'-deoxyuridine-5'-monophosphate (dUMP) to 2'-deoxythymidine-5'-monophosphate (dTMP) while utilizing 5,10-methylenetetrahydrofolate (mTHF) as the methyl donor, and NADPH and FADH(2) as the reductant. This Aquifex aeolicus (strain VF5) protein is Flavin-dependent thymidylate synthase.